The primary structure comprises 460 residues: Bifunctional protein GlmU (460 aa).

Residues Met-1 to Arg-232 form a pyrophosphorylase region. UDP-N-acetyl-alpha-D-glucosamine contacts are provided by residues Leu-8–Gly-11, Lys-22, Gln-73, Gly-78–Thr-79, Tyr-100–Asp-102, Gly-137, Glu-157, Asn-172, and Asn-230. Asp-102 contacts Mg(2+). Asn-230 provides a ligand contact to Mg(2+). Residues Val-233–Ala-253 form a linker region. The interval Gly-254–Lys-460 is N-acetyltransferase. Arg-336 and Lys-354 together coordinate UDP-N-acetyl-alpha-D-glucosamine. His-366 serves as the catalytic Proton acceptor. UDP-N-acetyl-alpha-D-glucosamine contacts are provided by Tyr-369 and Asn-380. Residues Ala-383, Asn-389–Tyr-390, Ser-408, Ala-426, and Arg-443 each bind acetyl-CoA.

It in the N-terminal section; belongs to the N-acetylglucosamine-1-phosphate uridyltransferase family. In the C-terminal section; belongs to the transferase hexapeptide repeat family. As to quaternary structure, homotrimer. Requires Mg(2+) as cofactor.

It localises to the cytoplasm. It carries out the reaction alpha-D-glucosamine 1-phosphate + acetyl-CoA = N-acetyl-alpha-D-glucosamine 1-phosphate + CoA + H(+). The enzyme catalyses N-acetyl-alpha-D-glucosamine 1-phosphate + UTP + H(+) = UDP-N-acetyl-alpha-D-glucosamine + diphosphate. The protein operates within nucleotide-sugar biosynthesis; UDP-N-acetyl-alpha-D-glucosamine biosynthesis; N-acetyl-alpha-D-glucosamine 1-phosphate from alpha-D-glucosamine 6-phosphate (route II): step 2/2. It participates in nucleotide-sugar biosynthesis; UDP-N-acetyl-alpha-D-glucosamine biosynthesis; UDP-N-acetyl-alpha-D-glucosamine from N-acetyl-alpha-D-glucosamine 1-phosphate: step 1/1. It functions in the pathway bacterial outer membrane biogenesis; LPS lipid A biosynthesis. Its function is as follows. Catalyzes the last two sequential reactions in the de novo biosynthetic pathway for UDP-N-acetylglucosamine (UDP-GlcNAc). The C-terminal domain catalyzes the transfer of acetyl group from acetyl coenzyme A to glucosamine-1-phosphate (GlcN-1-P) to produce N-acetylglucosamine-1-phosphate (GlcNAc-1-P), which is converted into UDP-GlcNAc by the transfer of uridine 5-monophosphate (from uridine 5-triphosphate), a reaction catalyzed by the N-terminal domain. The protein is Bifunctional protein GlmU of Shewanella baltica (strain OS223).